We begin with the raw amino-acid sequence, 463 residues long: L-seryl-tRNA(Sec) selenium transferase (463 aa).

Lys-295 is modified (N6-(pyridoxal phosphate)lysine).

This sequence belongs to the SelA family. Homodecamer; pentamer of dimers. Binds only one seryl-tRNA(Sec) per dimer. Pyridoxal 5'-phosphate is required as a cofactor.

Its subcellular location is the cytoplasm. The enzyme catalyses L-seryl-tRNA(Sec) + selenophosphate + H(+) = L-selenocysteinyl-tRNA(Sec) + phosphate. It participates in aminoacyl-tRNA biosynthesis; selenocysteinyl-tRNA(Sec) biosynthesis; selenocysteinyl-tRNA(Sec) from L-seryl-tRNA(Sec) (bacterial route): step 1/1. In terms of biological role, converts seryl-tRNA(Sec) to selenocysteinyl-tRNA(Sec) required for selenoprotein biosynthesis. The chain is L-seryl-tRNA(Sec) selenium transferase from Salmonella dublin (strain CT_02021853).